A 320-amino-acid chain; its full sequence is Ribosomal RNA small subunit methyltransferase H (320 aa).

Residues 42–44, Asp-62, Phe-86, Asp-108, and Gln-115 each bind S-adenosyl-L-methionine; that span reads GGH.

It belongs to the methyltransferase superfamily. RsmH family.

Its subcellular location is the cytoplasm. It catalyses the reaction cytidine(1402) in 16S rRNA + S-adenosyl-L-methionine = N(4)-methylcytidine(1402) in 16S rRNA + S-adenosyl-L-homocysteine + H(+). Specifically methylates the N4 position of cytidine in position 1402 (C1402) of 16S rRNA. The chain is Ribosomal RNA small subunit methyltransferase H from Yersinia pseudotuberculosis serotype O:1b (strain IP 31758).